Consider the following 242-residue polypeptide: UPF0309 protein BH3325 (242 aa).

Residues 34–217 (VSEAVMNGGR…HLLVQQGFEP (184 aa)) enclose the SIS domain.

Belongs to the UPF0309 family.

The chain is UPF0309 protein BH3325 from Halalkalibacterium halodurans (strain ATCC BAA-125 / DSM 18197 / FERM 7344 / JCM 9153 / C-125) (Bacillus halodurans).